Here is a 430-residue protein sequence, read N- to C-terminus: Gamma-glutamyl phosphate reductase (430 aa).

Belongs to the gamma-glutamyl phosphate reductase family.

The protein resides in the cytoplasm. The catalysed reaction is L-glutamate 5-semialdehyde + phosphate + NADP(+) = L-glutamyl 5-phosphate + NADPH + H(+). It participates in amino-acid biosynthesis; L-proline biosynthesis; L-glutamate 5-semialdehyde from L-glutamate: step 2/2. Catalyzes the NADPH-dependent reduction of L-glutamate 5-phosphate into L-glutamate 5-semialdehyde and phosphate. The product spontaneously undergoes cyclization to form 1-pyrroline-5-carboxylate. The polypeptide is Gamma-glutamyl phosphate reductase (Methylococcus capsulatus (strain ATCC 33009 / NCIMB 11132 / Bath)).